We begin with the raw amino-acid sequence, 867 residues long: Glutamate receptor 1.2 (867 aa).

The N-terminal stretch at 1–27 (MVRICIQTPILLSFLLVLLFFISNCFA) is a signal peptide. The Extracellular portion of the chain corresponds to 28–560 (SSQNNDDDKR…SMWVFFQPLT (533 aa)). N301, N400, N496, and N499 each carry an N-linked (GlcNAc...) asparagine glycan. The helical transmembrane segment at 561–581 (PNLWITSAAFFVLTGIIVWLI) threads the bilayer. Topologically, residues 582–590 (ERAENKEFQ) are cytoplasmic. Residues 591 to 611 (GSWPQQIGVVIWFGFSTLVYA) form a helical membrane-spanning segment. Over 612–622 (HREKLQHNLSR) the chain is Cytoplasmic. The chain crosses the membrane as a helical span at residues 623–643 (FVVTVWVFAVLILVTSYTATL). Over 644 to 792 (TSMMTVQQIR…NPITLYRFRG (149 aa)) the chain is Extracellular. 4 N-linked (GlcNAc...) asparagine glycosylation sites follow: N676, N688, N699, and N748. Residues 793–813 (LFMITGVSFAFALAVLLILWL) form a helical membrane-spanning segment. At 814–867 (RERWEILVNSVNIYFSQRLRHFRILFTRTIHPSPLGLDNPIGENAVQMAQRNRR) the chain is on the cytoplasmic side.

It belongs to the glutamate-gated ion channel (TC 1.A.10.1) family. May form heteromers. In terms of tissue distribution, expressed predominantly in roots and siliques.

The protein resides in the membrane. Glutamate-gated receptor that probably acts as a non-selective cation channel. May be involved in light-signal transduction and calcium homeostasis via the regulation of calcium influx into cells. The protein is Glutamate receptor 1.2 (GLR1.2) of Arabidopsis thaliana (Mouse-ear cress).